A 570-amino-acid chain; its full sequence is MPYKISRAAYAGMFGPTTGDKVRLADTELFIEIEKDFTTYGEEVKFGGGKVIRDGMGQSQVTRADGAVDTVITNAVIVDHSGIYKADIGLKDGRIVAIGKAGNPDMQPGVNIIVGPGTEAIAAEGKIVTAGGMDSHIHFIAPQQIEEALMSGMTCMLGGGTGPAHGTLATTCTPGPWHLARMIEAADAFPMNLAFAGKGNASLPGALTEMVLAGATSLKLHEDWGTTPGAIDCCLSVADEYDVQVMIHTDTLNESGFVEDTIGAIKGRTIHAFHTEGAGGGHAPDIIKICGQPNVIPSSTNPTRPYTVNTIAEHLDMLMVCHHLSPSIPEDIAFAESRIRKETIAAEDILHDIGAFSIISSDSQAMGRVGEVAIRTWQTADKMKRQRGRLKEEKGDNDNFRVRRYIAKYTINPAIAHGLSREIGSVEVGKRADLVLWNPAFFGVKPDMVLLGGSIAAAPMGDPNASIPTPQPVHYRPMFASYGKSLTNSSVTFVSQASLDAGLKGRLGVAKELVAVKNTRGGISKASMIHNDLTPEIEVDPETYEVRANGELLACEPATVLPMAQRYFLF.

Residues 131–570 (GGMDSHIHFI…LPMAQRYFLF (440 aa)) enclose the Urease domain. Residues His136, His138, and Lys219 each contribute to the Ni(2+) site. An N6-carboxylysine modification is found at Lys219. His221 serves as a coordination point for substrate. Positions 248 and 274 each coordinate Ni(2+). The active-site Proton donor is His322. Asp362 lines the Ni(2+) pocket.

It belongs to the metallo-dependent hydrolases superfamily. Urease alpha subunit family. In terms of assembly, heterotrimer of UreA (gamma), UreB (beta) and UreC (alpha) subunits. Three heterotrimers associate to form the active enzyme. Ni cation serves as cofactor. Post-translationally, carboxylation allows a single lysine to coordinate two nickel ions.

It localises to the cytoplasm. It carries out the reaction urea + 2 H2O + H(+) = hydrogencarbonate + 2 NH4(+). Its pathway is nitrogen metabolism; urea degradation; CO(2) and NH(3) from urea (urease route): step 1/1. This chain is Urease subunit alpha, found in Rhizobium johnstonii (strain DSM 114642 / LMG 32736 / 3841) (Rhizobium leguminosarum bv. viciae).